Here is a 459-residue protein sequence, read N- to C-terminus: Acetyltransferase pigO (459 aa).

It belongs to the trichothecene O-acetyltransferase family.

It participates in secondary metabolite biosynthesis. Functionally, acetyltransferase; part of the gene cluster that mediates the biosynthesis of azaphilone pigments (MonAzPs), a complex mixture of compounds with a common azaphilone skeleton very widely used as food colorants. PigM and pigO are involved in the elimination of the omega-1 alcohol with pigM acting as an O-acetyltransferase that synthesizes the O-11 acetyl intermediate whereas pigO eliminates acetic acid to yield an intermediate with a C10(11) double bond. The first step of the pathway is performed by the nrPKS pigA that forms the hexaketide precursor from successive condensations of five malonyl-CoA units, with a simple acetyl-CoA starter unit. The role of esterase pigG is not clear, but it may play at most a supplementary role in the formation of the benzaldehyde produced by the pigA nrPKS. This very reactive benzaldehyde is intercepted by the pigC ketoreductase that to provide the first stable enzyme-free MonAzPs intermediate, 6-(4-hydroxy-2-oxopentyl)-3-methyl-2,4-dioxocyclohexane carbaldehyde, also known as M7PKS-1. The FAD-dependent monooxygenase pigN hydroxylates M7PKS-1 at C-4, which triggers the formation of the pyran ring. PigJ, pigK and pigD are involved in the acetylation of the pyran ring. PigJ and pigK form the two subunits of a dedicated fungal FAS that produces the side chain fatty acyl moiety of MonAzPs and pigD transfers the fatty acyl chain to the C-4 alcohol. PigM and pigO are involved in the elimination of the omega-1 alcohol. PigM acts as an O-acetyltransferase that synthesizes the putative O-11 acetyl intermediate whereas pigO eliminates acetic acid to yield an intermediate with a C10(11) double bond. The dehydration of the C-11 alcohol followed by the reduction of the C6(7) double bond by the NAD(P)H-dependent oxidoreductase pigE increases the electrophilicity of the C-5 ketone of the resulting acyl benzopyran. This in turn sets up the C-5 ketone for an intramolecular Knoevenagel aldol condensation with the C-20 enol of the side chain. This condensation affords the characteristic linear tricyclic carbon skeletons of the yellow pigments that serve as the common precursors for the classical yellow pigments monascin and ankaflavin, orange pigments rubopunctatin and monascorubrin, and red pigments ribropunctamine and monascorubramine. The FAD-dependent oxidoreductase pigF is especially invoved in the biosynthesis of orange and red pigments via desaturation of C6(7). This is Acetyltransferase pigO from Monascus ruber (Mold).